Here is a 266-residue protein sequence, read N- to C-terminus: MDARSLSGILTEVREKRPLVHHITNYVTVNDCANVTLCIGAAPVMAHAHDEVAEMVAMAGALVLNIGTLDHRQVESMLAAGHRANELNIPIILDPVGAGATRLRTETAKTLLHKLHVSVLKGNAGEIATLAGAEGKVRGVDSAGVSGDPAEFARGLAEKLGLVVAVSGATDIVTDGKRLIYVDNGHEMMGKLSGTGCMASSISGAFAAASKDYVTSTAAALASFGVAGEKAAKRCEGPASFKIALLDEIYRLTADEVAHNIKVRFA.

M45 contributes to the substrate binding site. Positions 121 and 167 each coordinate ATP. A substrate-binding site is contributed by G194.

This sequence belongs to the Thz kinase family. Requires Mg(2+) as cofactor.

The catalysed reaction is 5-(2-hydroxyethyl)-4-methylthiazole + ATP = 4-methyl-5-(2-phosphooxyethyl)-thiazole + ADP + H(+). It participates in cofactor biosynthesis; thiamine diphosphate biosynthesis; 4-methyl-5-(2-phosphoethyl)-thiazole from 5-(2-hydroxyethyl)-4-methylthiazole: step 1/1. Its function is as follows. Catalyzes the phosphorylation of the hydroxyl group of 4-methyl-5-beta-hydroxyethylthiazole (THZ). The chain is Hydroxyethylthiazole kinase from Methanocella arvoryzae (strain DSM 22066 / NBRC 105507 / MRE50).